We begin with the raw amino-acid sequence, 471 residues long: 3-isopropylmalate dehydratase large subunit (471 aa).

[4Fe-4S] cluster contacts are provided by Cys-347, Cys-407, and Cys-410.

The protein belongs to the aconitase/IPM isomerase family. LeuC type 1 subfamily. As to quaternary structure, heterodimer of LeuC and LeuD. [4Fe-4S] cluster is required as a cofactor.

The catalysed reaction is (2R,3S)-3-isopropylmalate = (2S)-2-isopropylmalate. It functions in the pathway amino-acid biosynthesis; L-leucine biosynthesis; L-leucine from 3-methyl-2-oxobutanoate: step 2/4. Functionally, catalyzes the isomerization between 2-isopropylmalate and 3-isopropylmalate, via the formation of 2-isopropylmaleate. The polypeptide is 3-isopropylmalate dehydratase large subunit (Geobacillus kaustophilus (strain HTA426)).